The chain runs to 652 residues: Drebrin (652 aa).

Residue Ala2 is modified to N-acetylalanine. The region spanning 5–134 (GFAAHRLELL…DPGAIGQRLS (130 aa)) is the ADF-H domain. Composition is skewed to basic and acidic residues over residues 211 to 236 (MEQERLEQEERERRYREREEQIEEHR) and 288 to 298 (DNPREFFKQQE). Disordered stretches follow at residues 211–350 (MEQE…YITC) and 371–652 (SAAG…GGGL). Residues 328–340 (SGPPSSSSSSSSP) show a composition bias toward low complexity. The segment covering 507–517 (PDTPAGPPVPP) has biased composition (pro residues). 2 stretches are compositionally biased toward acidic residues: residues 540-554 (QHEEVEEEEEEEEAT) and 640-652 (PLPEEEESFGGGL).

As to expression, brain neurons.

The protein resides in the cytoplasm. The protein localises to the cell projection. It is found in the dendrite. Its subcellular location is the cell cortex. It localises to the cell junction. The protein resides in the growth cone. Its function is as follows. Actin cytoskeleton-organizing protein that plays a role in the formation of cell projections. Plays a role in dendritic spine morphogenesis and organization, including the localization of the dopamine receptor DRD1 to the dendritic spines. Involved in synaptic plasticity. This is Drebrin (DBN1) from Gallus gallus (Chicken).